Reading from the N-terminus, the 330-residue chain is UPF0324 membrane protein BT_4609 (330 aa).

Helical transmembrane passes span 16–33 (IYVA…LDYI), 38–60 (AWSA…LTCG), 73–95 (YLLQ…LASG), 99–116 (MEFT…GWFI), 128–150 (SYLI…GPVL), 160–182 (ALGT…GHAL), 189–211 (FGTW…AAYG), 221–240 (IKLT…SFIF), 247–269 (ISIP…LLNG), and 284–306 (TLTI…SVGV).

It belongs to the UPF0324 family.

Its subcellular location is the cell membrane. The chain is UPF0324 membrane protein BT_4609 from Bacteroides thetaiotaomicron (strain ATCC 29148 / DSM 2079 / JCM 5827 / CCUG 10774 / NCTC 10582 / VPI-5482 / E50).